Here is a 186-residue protein sequence, read N- to C-terminus: Chromophore lyase CpcS/CpeS 1 (186 aa).

Belongs to the CpcS/CpeS biliprotein lyase family.

In terms of biological role, covalently attaches a chromophore to Cys residue(s) of phycobiliproteins. In Synechocystis sp. (strain ATCC 27184 / PCC 6803 / Kazusa), this protein is Chromophore lyase CpcS/CpeS 1.